The sequence spans 492 residues: Linolenate hydroperoxide lyase, chloroplastic (492 aa).

Residues 1-33 are disordered; it reads MLLRTMAATSPRPPPSTSLTSQQPPSPPSQLPL. A chloroplast-targeting transit peptide spans 1–34; that stretch reads MLLRTMAATSPRPPPSTSLTSQQPPSPPSQLPLR. Cysteine 454 contacts heme.

This sequence belongs to the cytochrome P450 family. Heme serves as cofactor. As to expression, expressed in roots, leaves, flowers and siliques.

It localises to the plastid. The protein localises to the chloroplast. In terms of biological role, catalyzes the conversion of (9Z,11E,15Z)-(13S)-hydroperoxyoctadeca-9,11,15-trienoate to (9Z)-12-oxo-dodec-9-enoate and cis-3-hexenal. Possesses low activity toward (9Z,11E)-(13S)-13-hydroperoxyoctadeca-9,11-dienoate. Required for the synthesis of the green leaf volatiles (GLVs) hexanal and trans-2-hexenal. In Arabidopsis thaliana (Mouse-ear cress), this protein is Linolenate hydroperoxide lyase, chloroplastic.